We begin with the raw amino-acid sequence, 66 residues long: Large ribosomal subunit protein bL33c (66 aa).

The protein belongs to the bacterial ribosomal protein bL33 family.

It localises to the plastid. The protein localises to the chloroplast. This chain is Large ribosomal subunit protein bL33c, found in Oenothera argillicola (Appalachian evening primrose).